We begin with the raw amino-acid sequence, 88 residues long: Small ribosomal subunit protein bS20 (88 aa).

The protein belongs to the bacterial ribosomal protein bS20 family.

Binds directly to 16S ribosomal RNA. The protein is Small ribosomal subunit protein bS20 of Brucella abortus (strain S19).